We begin with the raw amino-acid sequence, 300 residues long: Mitochondrial carnitine/acylcarnitine carrier-like protein (300 aa).

Solcar repeat units lie at residues 2–93 (ADAW…MEGL), 102–201 (LTIS…FKRF), and 211–298 (LGQG…TRSS). Helical transmembrane passes span 8–28 (LASGTVGGAAQLVVGHPFDTI), 64–84 (GLYKGMGAPLATVAAFNAVLF), 108–128 (FVAGAGAGFAVSFLACPTELI), 176–195 (GLFPTFAREVPGNATMFAAY), 211–231 (LGQGSLIMAGGVAGASFWGIV), and 273–292 (GFGPAMARSVPANAACFLAY).

The protein belongs to the mitochondrial carrier (TC 2.A.29) family. In terms of tissue distribution, high expression in cotyledons, leaves, flowers and developing siliques. Lower expression in roots and maturing siliques. Not detected in meristematic tissues.

Its subcellular location is the mitochondrion inner membrane. Involved in photorespiratory metabolism. Acts probably as a carrier for a glycine decarboxylase (GDC) cofactor or, alternatively, may act as a mitochondrial glycine shuttle. Involved in the transition from the embryonic stage to the juvenile autotrophic stage. In Arabidopsis thaliana (Mouse-ear cress), this protein is Mitochondrial carnitine/acylcarnitine carrier-like protein (BOU).